Here is a 447-residue protein sequence, read N- to C-terminus: N-succinylarginine dihydrolase (447 aa).

Residues 19 to 28 (AGLSFGNEAS), Asn-110, and 137 to 138 (HR) contribute to the substrate site. Residue Glu-174 is part of the active site. Arg-212 contributes to the substrate binding site. The active site involves His-248. 2 residues coordinate substrate: Asp-250 and Asn-359. Cys-365 functions as the Nucleophile in the catalytic mechanism.

Belongs to the succinylarginine dihydrolase family. In terms of assembly, homodimer.

It carries out the reaction N(2)-succinyl-L-arginine + 2 H2O + 2 H(+) = N(2)-succinyl-L-ornithine + 2 NH4(+) + CO2. It functions in the pathway amino-acid degradation; L-arginine degradation via AST pathway; L-glutamate and succinate from L-arginine: step 2/5. Catalyzes the hydrolysis of N(2)-succinylarginine into N(2)-succinylornithine, ammonia and CO(2). In Escherichia coli O139:H28 (strain E24377A / ETEC), this protein is N-succinylarginine dihydrolase.